Here is a 263-residue protein sequence, read N- to C-terminus: uncharacterized protein (263 aa).

31–38 (GPTGSGKT) is an ATP binding site.

This sequence belongs to the CbbQ/NirQ/NorQ/GpvN family.

This is an uncharacterized protein from Staphylococcus aureus (strain USA300).